The primary structure comprises 810 residues: Transducer protein CosT (810 aa).

At 1-38 (MSEPTADAGDNSPSSTDTAPLDRVKAIALLPLRSYLVK) the chain is on the cytoplasmic side. A helical membrane pass occupies residues 39-59 (FAVALLVILVIIAAGGFWVQA). At 60–323 (DATATLEANT…AFALSNQIRT (264 aa)) the chain is on the extracellular side. A helical membrane pass occupies residues 324-344 (GILGFILVALVGVVLVGGTIG). Residues 345–397 (RNTAAAVQSLSAAAAEIEAGNYDVDVASSRRDEIGQLFASIGSMRDALVTQID) enclose the HAMP 1 domain. Residues 345-810 (RNTAAAVQSL…DRDVTPTQTD (466 aa)) are Cytoplasmic-facing. Residues 403–427 (REQATEAQQDAEAERERAEDARERA) form a disordered region. Basic and acidic residues predominate over residues 414–427 (EAERERAEDARERA). Residues 439–493 (AELEAQAERYSDVMAACADGDLTRRMPADDTDNEAMAAIAASFNEMLAQWEHTII) form the HAMP 2 domain. The 237-residue stretch at 512-748 (GAADAERASG…EAVSMTEEVA (237 aa)) folds into the Methyl-accepting transducer domain. Glutamate methyl ester (Glu) occurs at positions 556 and 739. Positions 751–784 (SDSTAGEAQSVSAAAEEQAASMSEISDSVESLSG) are disordered. Over residues 755 to 774 (AGEAQSVSAAAEEQAASMSE) the composition is skewed to low complexity. Residues 775 to 784 (ISDSVESLSG) show a composition bias toward polar residues.

The protein belongs to the methyl-accepting chemotaxis (MCP) protein family. In terms of processing, methylated by CheR.

The protein localises to the cell membrane. In terms of biological role, mediates chemotaxis towards compatible osmolytes. Probably transduces the signal from the substrate-binding protein CosB to the histidine kinase CheA. The protein is Transducer protein CosT (cosT) of Halobacterium salinarum (strain ATCC 700922 / JCM 11081 / NRC-1) (Halobacterium halobium).